The following is a 154-amino-acid chain: 3-hydroxyacyl-[acyl-carrier-protein] dehydratase FabZ (154 aa).

The active site involves His57.

This sequence belongs to the thioester dehydratase family. FabZ subfamily.

Its subcellular location is the cytoplasm. The catalysed reaction is a (3R)-hydroxyacyl-[ACP] = a (2E)-enoyl-[ACP] + H2O. Functionally, involved in unsaturated fatty acids biosynthesis. Catalyzes the dehydration of short chain beta-hydroxyacyl-ACPs and long chain saturated and unsaturated beta-hydroxyacyl-ACPs. The polypeptide is 3-hydroxyacyl-[acyl-carrier-protein] dehydratase FabZ (Sinorhizobium medicae (strain WSM419) (Ensifer medicae)).